Consider the following 100-residue polypeptide: Large ribosomal subunit protein uL23 (100 aa).

It belongs to the universal ribosomal protein uL23 family. As to quaternary structure, part of the 50S ribosomal subunit. Contacts protein L29, and trigger factor when it is bound to the ribosome.

In terms of biological role, one of the early assembly proteins it binds 23S rRNA. One of the proteins that surrounds the polypeptide exit tunnel on the outside of the ribosome. Forms the main docking site for trigger factor binding to the ribosome. In Shewanella denitrificans (strain OS217 / ATCC BAA-1090 / DSM 15013), this protein is Large ribosomal subunit protein uL23.